Here is a 377-residue protein sequence, read N- to C-terminus: Opsin, blue-sensitive (377 aa).

Topologically, residues Met-1–Phe-56 are extracellular. Residue Asn-5 is glycosylated (N-linked (GlcNAc...) asparagine). The chain crosses the membrane as a helical span at residues His-57–Ile-81. Topologically, residues Phe-82–Asn-93 are cytoplasmic. Residues Met-94–Met-119 form a helical membrane-spanning segment. Over Glu-120–Tyr-132 the chain is Extracellular. Cys-129 and Cys-206 are disulfide-bonded. Residues Ser-133 to Phe-152 form a helical membrane-spanning segment. The Cytoplasmic segment spans residues Asp-153–Gln-170. A helical transmembrane segment spans residues Ala-171–Gly-195. Topologically, residues Arg-196–Val-219 are extracellular. Residues Phe-220–Ile-247 traverse the membrane as a helical segment. The Cytoplasmic segment spans residues Arg-248–Lys-282. Residues Val-283–Val-306 form a helical membrane-spanning segment. Topologically, residues Tyr-307–Thr-314 are extracellular. A helical transmembrane segment spans residues Pro-315–Asn-339. Lys-326 carries the post-translational modification N6-(retinylidene)lysine. Residues His-340–Glu-377 lie on the Cytoplasmic side of the membrane.

The protein belongs to the G-protein coupled receptor 1 family. Opsin subfamily. In terms of processing, phosphorylated on some or all of the serine and threonine residues present in the C-terminal region. In terms of tissue distribution, expressed in the dorsal region of the retina and sparsely expressed in the ventral region.

It is found in the membrane. In terms of biological role, visual pigments are the light-absorbing molecules that mediate vision. They consist of an apoprotein, opsin, covalently linked to 11-cis-retinal. The protein is Opsin, blue-sensitive (BLOP) of Apis mellifera (Honeybee).